Consider the following 475-residue polypeptide: Putative response regulator NtrX-like (475 aa).

Residues D5–C121 form the Response regulatory domain. D54 carries the post-translational modification 4-aspartylphosphate. The Sigma-54 factor interaction domain occupies L143–I369. ATP is bound by residues G171–E178 and A232–E241.

In terms of biological role, member of the two-component regulatory system RF_0895/RF_0427. The protein is Putative response regulator NtrX-like of Rickettsia felis (strain ATCC VR-1525 / URRWXCal2) (Rickettsia azadi).